The following is a 216-amino-acid chain: V-type ATP synthase subunit D (216 aa).

Belongs to the V-ATPase D subunit family.

Produces ATP from ADP in the presence of a proton gradient across the membrane. The polypeptide is V-type ATP synthase subunit D (Clostridium botulinum (strain ATCC 19397 / Type A)).